Reading from the N-terminus, the 208-residue chain is Proheparin-binding EGF-like growth factor (208 aa).

The signal sequence occupies residues 1-19 (MKLLPSVVLKLFLAAVLSA). The propeptide at 20–62 (LVTGESLERLRRGLAAGTSNPDPPTVSTDQLLPLGGGRDRKVR) is or 72, or 73, or 76, or 81. Over 20-160 (LVTGESLERL…ENRLYTYDHT (141 aa)) the chain is Extracellular. The segment at 33–56 (LAAGTSNPDPPTVSTDQLLPLGGG) is disordered. A compositionally biased stretch (polar residues) spans 36-49 (GTSNPDPPTVSTDQ). T37 is a glycosylation site (O-linked (GalNAc...) threonine). A glycan (O-linked (GalNAc...) serine) is linked at S38. O-linked (GalNAc...) threonine glycosylation is found at T44, T47, T75, and T85. The segment at 82–104 (ALATPNKEEHGKRKKKGKGLGKK) is disordered. Positions 93–102 (KRKKKGKGLG) are enriched in basic residues. Positions 104-144 (KRDPCLRKYKDFCIHGECKYVKELRAPSCICHPGYHGERCH) constitute an EGF-like domain. 3 disulfides stabilise this stretch: C108–C121, C116–C132, and C134–C143. The propeptide at 149-208 (PVENRLYTYDHTTILAVVAVVLSSVCLLVIVGLLMFRYHRRGGYDVENEEKVKLGMTNSH) is C-terminal. Residues 161–184 (TILAVVAVVLSSVCLLVIVGLLMF) form a helical membrane-spanning segment. Over 185–208 (RYHRRGGYDVENEEKVKLGMTNSH) the chain is Cytoplasmic.

Interacts with FBLN1. Interacts with EGFR and ERBB4. Post-translationally, several N-termini have been identified by direct sequencing. The forms with N-termini 63, 73 and 74 have been tested and found to be biologically active. O-glycosylated with core 1 or possibly core 8 glycans. Thr-47 is a minor glycosylation site compared to Thr-44.

It is found in the secreted. The protein localises to the extracellular space. The protein resides in the cell membrane. Its function is as follows. Growth factor that mediates its effects via EGFR, ERBB2 and ERBB4. Required for normal cardiac valve formation and normal heart function. Promotes smooth muscle cell proliferation. May be involved in macrophage-mediated cellular proliferation. It is mitogenic for fibroblasts, but not endothelial cells. It is able to bind EGF receptor/EGFR with higher affinity than EGF itself and is a far more potent mitogen for smooth muscle cells than EGF. Also acts as a diphtheria toxin receptor. The protein is Proheparin-binding EGF-like growth factor (HBEGF) of Homo sapiens (Human).